We begin with the raw amino-acid sequence, 243 residues long: Ice-binding protein K1-A (243 aa).

An N-terminal signal peptide occupies residues 1–20 (MFSSTYLLAIIALAVSSVFA).

Belongs to the ice-binding protein family.

It is found in the secreted. Functionally, binds to the surface of ice crystals. Inhibits growth of the ice crystals. Has antifreeze activity for survival under snow cover. Has high thermal hysteresis (TH) activity, which is the ability to lower the freezing point of an aqueous solution below its melting point, and thus the freezing of the cell fluid can be prevented protecting the organism from ice damage. The TH activity of this protein is 2.0 degrees Celsius at 0.11 mM. The sequence is that of Ice-binding protein K1-A from Typhula ishikariensis (Gray snow mold fungus).